The following is a 291-amino-acid chain: AA14 family lytic polysaccharide monooxygenase (291 aa).

The first 17 residues, 1 to 17, serve as a signal peptide directing secretion; sequence MLTTAILFTSLAGSAYA. N-linked (GlcNAc...) asparagine glycosylation occurs at N141. Cystine bridges form between C192-C197, C199-C220, and C240-C247.

This sequence belongs to the polysaccharide monooxygenase AA14 family. It depends on Cu(2+) as a cofactor.

It localises to the secreted. Lytic polysaccharide monooxygenase (LPMO) that is active against heteroxylan, xyloglucan and cellulose in beta-cellulose and released native oligosaccharides and corresponding C1- and/or C4-oxidized products. May act mainly on heteroxylan with numerous arabinosyl substituents between cellulose fibers rather than on recalcitrant xylan tightly associated with cellulose. Catalysis by LPMOs requires the reduction of the active-site copper from Cu(II) to Cu(I) by a reducing agent and H(2)O(2) or O(2) as a cosubstrate. Shows a branched chain preference, and has synergistic effects with the Penicillium parvum debranching enzyme ABF62C in an enzyme- and ascorbic acid-dependent manner. Also has synergistic effects with the Penicillium parvum GH10 endoxylanase XYN1, and the degree of synergy was greater with step-by-step addition than with simultaneous addition. The polypeptide is AA14 family lytic polysaccharide monooxygenase (Sordaria brevicollis).